We begin with the raw amino-acid sequence, 187 residues long: Transcription antitermination protein NusB (187 aa).

The tract at residues Ala-135–Asp-187 is disordered. The span at Val-141–Asp-151 shows a compositional bias: acidic residues.

It belongs to the NusB family.

Involved in transcription antitermination. Required for transcription of ribosomal RNA (rRNA) genes. Binds specifically to the boxA antiterminator sequence of the ribosomal RNA (rrn) operons. This is Transcription antitermination protein NusB from Bifidobacterium longum subsp. infantis (strain ATCC 15697 / DSM 20088 / JCM 1222 / NCTC 11817 / S12).